Here is a 428-residue protein sequence, read N- to C-terminus: Putative G-protein coupled receptor F59B2.13 (428 aa).

At 1-30 (MSNNTTIPSKTATDICLTDRQMSLSVSSTE) the chain is on the extracellular side. Residues Asn3 and Asn4 are each glycosylated (N-linked (GlcNAc...) asparagine). The helical transmembrane segment at 31-51 (GVLIGTIIPILVLFGISGNIL) threads the bilayer. At 52 to 67 (NLTVLLAPNLRTRSNQ) the chain is on the cytoplasmic side. A helical transmembrane segment spans residues 68–88 (LLACLAVADIVSLVVILPHSM). Topologically, residues 89 to 110 (AHYETFETALWFRKFYGKYKFQ) are extracellular. The chain crosses the membrane as a helical span at residues 111–131 (IIAMTNWSIATATWLVFVICL). The Cytoplasmic segment spans residues 132–154 (ERLIIIKYPLSVRKQAKFFTPRN). A helical transmembrane segment spans residues 155-175 (VVTIIVVTTFILTSYNHVSHA). At 176–222 (CAEKLFCNGTQYHVACLGIDSERWFRNEPNPNSEFMKSVVRVAPQVN) the chain is on the extracellular side. N-linked (GlcNAc...) asparagine glycosylation occurs at Asn183. The chain crosses the membrane as a helical span at residues 223–243 (AIFVVLIPVVLVIIFNVMLIL). At 244–278 (TLRQRTKLFEPSKTIRGDSQFTQLQSKTEHKVTIT) the chain is on the cytoplasmic side. The chain crosses the membrane as a helical span at residues 279–299 (VTAIVTCFTITQSPSAFVTFL). At 300–309 (SSYVHRDWVT) the chain is on the extracellular side. The helical transmembrane segment at 310 to 330 (LSAICTILVVLGKALNFVLFC) threads the bilayer. The Cytoplasmic portion of the chain corresponds to 331–428 (LSSASFRQRL…KEFRRGTSFV (98 aa)).

Belongs to the G-protein coupled receptor 1 family.

The protein resides in the cell membrane. In Caenorhabditis elegans, this protein is Putative G-protein coupled receptor F59B2.13.